Reading from the N-terminus, the 167-residue chain is Centrin-3 (167 aa).

EF-hand domains are found at residues 25–60 (EQKQ…LGFD), 61–96 (VKKA…WILE), 98–133 (DPHE…LGEN), and 134–167 (MSDE…TGDI). Ca(2+) is bound by residues Asp-38, Asp-40, Asp-42, and Glu-49. Phosphoserine is present on Ser-135. Ca(2+)-binding residues include Asp-147, Asp-149, Asp-151, Glu-153, and Glu-158.

This sequence belongs to the centrin family. In terms of assembly, monomer. Component of the TREX-2 complex (transcription and export complex 2), composed of at least ENY2, GANP, PCID2, SEM1, and either centrin CETN2 or CETN3. Interacts with USP49.

It localises to the cytoplasm. It is found in the cytoskeleton. The protein localises to the microtubule organizing center. Its subcellular location is the centrosome. The protein resides in the nucleus. It localises to the nucleolus. It is found in the nucleus envelope. The protein localises to the nuclear pore complex. Its subcellular location is the centriole. In terms of biological role, plays a fundamental role in microtubule-organizing center structure and function. Functionally, as a component of the TREX-2 complex, involved in the export of mRNAs to the cytoplasm through the nuclear pores. This Mus musculus (Mouse) protein is Centrin-3 (Cetn3).